Here is a 206-residue protein sequence, read N- to C-terminus: Small ribosomal subunit protein uS4 (206 aa).

Residues Gly-96–Lys-156 enclose the S4 RNA-binding domain.

It belongs to the universal ribosomal protein uS4 family. As to quaternary structure, part of the 30S ribosomal subunit. Contacts protein S5. The interaction surface between S4 and S5 is involved in control of translational fidelity.

In terms of biological role, one of the primary rRNA binding proteins, it binds directly to 16S rRNA where it nucleates assembly of the body of the 30S subunit. With S5 and S12 plays an important role in translational accuracy. This Pasteurella multocida (strain Pm70) protein is Small ribosomal subunit protein uS4.